We begin with the raw amino-acid sequence, 184 residues long: Protein YrdA (184 aa).

This sequence belongs to the gamma-class carbonic anhydrase family.

This Escherichia coli (strain K12) protein is Protein YrdA (yrdA).